Here is an 815-residue protein sequence, read N- to C-terminus: Bifunctional aspartokinase/homoserine dehydrogenase (815 aa).

The aspartokinase stretch occupies residues 1 to 249 (MRVLKFGGTS…VPDARLLPTL (249 aa)). The tract at residues 250–470 (SYREAMELSY…NNKKVVDMFL (221 aa)) is interface. 2 ACT domains span residues 320-392 (VSGP…PIEV) and 401-478 (VVGD…GVGG). A homoserine dehydrogenase region spans residues 471 to 815 (VGVGGVGGEL…FADILRTLQH (345 aa)). The NAD(+) site is built by V473, G475, V476, A504, and T555. V476 provides a ligand contact to NADP(+). V476 lines the NADPH pocket. NADP(+) is bound at residue T555. NADPH-binding residues include T555, S556, and K579. Residue K579 participates in NADP(+) binding. E606, V609, A611, and L613 together coordinate Na(+). Positions 664 and 667 each coordinate NADP(+). L-homoserine is bound by residues E667 and D678. K682 serves as the catalytic Proton donor. G797 provides a ligand contact to NAD(+). Position 797 (G797) interacts with NADP(+). G797 lines the NADPH pocket.

The protein in the N-terminal section; belongs to the aspartokinase family. This sequence in the C-terminal section; belongs to the homoserine dehydrogenase family. As to quaternary structure, homotetramer. Requires a metal cation as cofactor.

The enzyme catalyses L-homoserine + NADP(+) = L-aspartate 4-semialdehyde + NADPH + H(+). It catalyses the reaction L-homoserine + NAD(+) = L-aspartate 4-semialdehyde + NADH + H(+). The catalysed reaction is L-aspartate + ATP = 4-phospho-L-aspartate + ADP. It functions in the pathway amino-acid biosynthesis; L-lysine biosynthesis via DAP pathway; (S)-tetrahydrodipicolinate from L-aspartate: step 1/4. The protein operates within amino-acid biosynthesis; L-methionine biosynthesis via de novo pathway; L-homoserine from L-aspartate: step 1/3. Its pathway is amino-acid biosynthesis; L-methionine biosynthesis via de novo pathway; L-homoserine from L-aspartate: step 3/3. It participates in amino-acid biosynthesis; L-threonine biosynthesis; L-threonine from L-aspartate: step 1/5. It functions in the pathway amino-acid biosynthesis; L-threonine biosynthesis; L-threonine from L-aspartate: step 3/5. In terms of biological role, bifunctional aspartate kinase and homoserine dehydrogenase that catalyzes the first and the third steps toward the synthesis of lysine, methionine and threonine from aspartate. The polypeptide is Bifunctional aspartokinase/homoserine dehydrogenase (thrA) (Haemophilus influenzae (strain ATCC 51907 / DSM 11121 / KW20 / Rd)).